The sequence spans 207 residues: UPF0126 inner membrane protein YadS (207 aa).

The chain crosses the membrane as a helical span at residues 1 to 21 (MLVYWLDIVGTAVFAISGVLL). At 22-29 (AGKLRMDP) the chain is on the cytoplasmic side. The helical transmembrane segment at 30–50 (FGVLVLGVVTAVGGGTIRDMA) threads the bilayer. Residues 51–58 (LDHGPVFW) are Periplasmic-facing. Residues 59 to 79 (VKDPTDLVVAMVTSMLTIVLV) form a helical membrane-spanning segment. Over 80–85 (RQPRRL) the chain is Cytoplasmic. Residues 86–106 (PKWMLPVLDAVGLAVFVGIGV) traverse the membrane as a helical segment. Over 107-112 (NKAFNA) the chain is Periplasmic. Residues 113–133 (EAGPLIAVCMGVITGVGGGII) traverse the membrane as a helical segment. Residues 134–148 (RDVLAREIPMILRTE) are Cytoplasmic-facing. Residues 149-169 (IYATACIIGGIVHATAYYTFS) form a helical membrane-spanning segment. Valine 170 is a topological domain (periplasmic). A helical membrane pass occupies residues 171 to 191 (PLETASMMGMVVTLLIRLAAI). Topologically, residues 192 to 207 (RWHLKLPTFALDENGR) are cytoplasmic.

It belongs to the UPF0126 family.

It is found in the cell inner membrane. The protein is UPF0126 inner membrane protein YadS (yadS) of Escherichia coli O6:H1 (strain CFT073 / ATCC 700928 / UPEC).